The chain runs to 483 residues: Proton-coupled amino acid transporter 2 (483 aa).

The Cytoplasmic segment spans residues 1 to 58; it reads MSVTKSTEGPQGAVAIKLDLMSPPESAKKLENKDSTFLDESPSESAGLKKTKGITVFQ. Basic and acidic residues predominate over residues 26–36; sequence SAKKLENKDST. A disordered region spans residues 26 to 46; sequence SAKKLENKDSTFLDESPSESA. The helical transmembrane segment at 59-79 threads the bilayer; it reads ALIHLVKGNMGTGILGLPLAV. Topologically, residues 80-81 are extracellular; sequence KN. The chain crosses the membrane as a helical span at residues 82–102; that stretch reads AGILMGPLSLLVMGFIACHCM. At 103–148 the chain is on the cytoplasmic side; it reads HILVKCAQRFCKRLNKPFMDYGDTVMHGLEANPNAWLQNHAHWGRH. Residues 149–169 traverse the membrane as a helical segment; sequence IVSFFLIITQLGFCCVYIVFL. Residues 170–197 are Extracellular-facing; that stretch reads ADNLKQVVEAVNSTTNNCYSNETVILTP. A helical membrane pass occupies residues 198-218; sequence TMDSRLYMLSFLPFLVLLVLI. At 219–222 the chain is on the cytoplasmic side; that stretch reads RNLR. A helical transmembrane segment spans residues 223-243; that stretch reads ILTIFSMLANISMLVSLVIII. The Extracellular segment spans residues 244-264; that stretch reads QYITQEIPDPSRLPLVASWKT. A helical membrane pass occupies residues 265 to 285; that stretch reads YPLFFGTAIFSFESIGVVLPL. Over 286 to 296 the chain is Cytoplasmic; sequence ENKMKNARHFP. Residues 297–317 traverse the membrane as a helical segment; it reads AILSLGMSIVTSLYIGMAALG. Residues 318–349 are Extracellular-facing; it reads YLRFGDDIKASISLNLPNCWLYQSVKLLYIAG. A helical transmembrane segment spans residues 350 to 370; that stretch reads ILCTYALQFYVPAEIIIPFAI. At 371 to 379 the chain is on the cytoplasmic side; sequence SRVSTRWAL. Residues 380–400 traverse the membrane as a helical segment; it reads PLDLSIRLVMVCLTCLLAILI. The Extracellular portion of the chain corresponds to 401 to 404; it reads PRLD. A helical membrane pass occupies residues 405–425; sequence LVISLVGSVSGTALALIIPPL. At 426–437 the chain is on the cytoplasmic side; it reads LEVTTFYSEGMS. The helical transmembrane segment at 438-458 threads the bilayer; that stretch reads PLTIFKDALISILGFVGFVVG. At 459-483 the chain is on the extracellular side; the sequence is TYQALDELLKSEDSHPFSNSTTFVR.

The protein belongs to the amino acid/polyamine transporter 2 family. In terms of tissue distribution, abundantly expressed in kidney and muscle. Expressed in the S1 segment of the proximal tubule close to the glomerulus.

It localises to the cell membrane. The protein resides in the endoplasmic reticulum membrane. The protein localises to the recycling endosome membrane. The catalysed reaction is glycine(in) + H(+)(in) = glycine(out) + H(+)(out). The enzyme catalyses L-alanine(in) + H(+)(in) = L-alanine(out) + H(+)(out). It carries out the reaction D-alanine(in) + H(+)(in) = D-alanine(out) + H(+)(out). It catalyses the reaction L-proline(out) + H(+)(out) = L-proline(in) + H(+)(in). The catalysed reaction is D-proline(out) + H(+)(out) = D-proline(in) + H(+)(in). The enzyme catalyses 4-hydroxy-L-proline(in) + H(+)(in) = 4-hydroxy-L-proline(out) + H(+)(out). It carries out the reaction L-serine(in) + H(+)(in) = L-serine(out) + H(+)(out). It catalyses the reaction D-serine(out) + H(+)(out) = D-serine(in) + H(+)(in). The catalysed reaction is beta-alanine(in) + H(+)(in) = beta-alanine(out) + H(+)(out). The enzyme catalyses 4-aminobutanoate(in) + H(+)(in) = 4-aminobutanoate(out) + H(+)(out). It carries out the reaction sarcosine(in) + H(+)(in) = sarcosine(out) + H(+)(out). It catalyses the reaction N,N-dimethylglycine(in) + H(+)(in) = N,N-dimethylglycine(out) + H(+)(out). Its function is as follows. Electrogenic proton/amino acid symporter with a high selectivity for the small side chains amino acids glycine, alanine and proline, where both L- and D-enantiomers are transported. Extension of the backbone length, as in beta-alanine and 4-aminobutanoate or methylation of the amino group, as in sarcosine and N,N-dimethylglycine, are also tolerated but decrease transport efficiency. A free carboxyl group is preferred. The chain is Proton-coupled amino acid transporter 2 from Homo sapiens (Human).